Here is a 454-residue protein sequence, read N- to C-terminus: Bifunctional protein GlmU (454 aa).

The tract at residues 1 to 228 (MTLPLHVVIL…PQDVEGANDP (228 aa)) is pyrophosphorylase. UDP-N-acetyl-alpha-D-glucosamine is bound by residues 10 to 13 (LAAG), Lys-24, Gln-76, 81 to 82 (GT), 103 to 105 (YGD), Gly-138, Glu-153, Asn-168, and Asn-226. Asp-105 contributes to the Mg(2+) binding site. Mg(2+) is bound at residue Asn-226. Positions 229–249 (WQLAQLERAWQLRAARALCLQ) are linker. An N-acetyltransferase region spans residues 250-454 (GVRMADPARV…IEGWERPKKK (205 aa)). Positions 332 and 350 each coordinate UDP-N-acetyl-alpha-D-glucosamine. His-362 serves as the catalytic Proton acceptor. Residues Tyr-365 and Asn-376 each coordinate UDP-N-acetyl-alpha-D-glucosamine. Acetyl-CoA-binding positions include Ala-379, 385–386 (NY), Ser-404, Ala-422, and Arg-439.

It in the N-terminal section; belongs to the N-acetylglucosamine-1-phosphate uridyltransferase family. The protein in the C-terminal section; belongs to the transferase hexapeptide repeat family. As to quaternary structure, homotrimer. Mg(2+) serves as cofactor.

It localises to the cytoplasm. The enzyme catalyses alpha-D-glucosamine 1-phosphate + acetyl-CoA = N-acetyl-alpha-D-glucosamine 1-phosphate + CoA + H(+). The catalysed reaction is N-acetyl-alpha-D-glucosamine 1-phosphate + UTP + H(+) = UDP-N-acetyl-alpha-D-glucosamine + diphosphate. It participates in nucleotide-sugar biosynthesis; UDP-N-acetyl-alpha-D-glucosamine biosynthesis; N-acetyl-alpha-D-glucosamine 1-phosphate from alpha-D-glucosamine 6-phosphate (route II): step 2/2. It functions in the pathway nucleotide-sugar biosynthesis; UDP-N-acetyl-alpha-D-glucosamine biosynthesis; UDP-N-acetyl-alpha-D-glucosamine from N-acetyl-alpha-D-glucosamine 1-phosphate: step 1/1. The protein operates within bacterial outer membrane biogenesis; LPS lipid A biosynthesis. In terms of biological role, catalyzes the last two sequential reactions in the de novo biosynthetic pathway for UDP-N-acetylglucosamine (UDP-GlcNAc). The C-terminal domain catalyzes the transfer of acetyl group from acetyl coenzyme A to glucosamine-1-phosphate (GlcN-1-P) to produce N-acetylglucosamine-1-phosphate (GlcNAc-1-P), which is converted into UDP-GlcNAc by the transfer of uridine 5-monophosphate (from uridine 5-triphosphate), a reaction catalyzed by the N-terminal domain. This is Bifunctional protein GlmU from Xanthomonas campestris pv. campestris (strain B100).